The sequence spans 234 residues: Homeobox protein ceh-51 (234 aa).

2 disordered regions span residues 128–154 (PPSFLHHQHQQHPRAPSEKRRGARTPF) and 209–234 (QIKQDAVQQQKSAKEEAEEDQKHVIS). Positions 147-206 (RRGARTPFSDSQLYALRTRFEQCDTIKVDERRKLGAVIGLSPEQIKIWFQNRRFKLRKEK) form a DNA-binding region, homeobox. The segment covering 220–234 (SAKEEAEEDQKHVIS) has biased composition (basic and acidic residues).

The protein belongs to the NK-2 homeobox family.

The protein resides in the nucleus. Its function is as follows. Required for mesoderm development, including specification of muscle and coelomocyte precursors. This is Homeobox protein ceh-51 from Caenorhabditis elegans.